The primary structure comprises 234 residues: Sugar fermentation stimulation protein A (234 aa).

Positions 201–220 form a DNA-binding region, H-T-H motif; sequence LLSEAQQRGVEILAYKAELS.

It belongs to the SfsA family.

Its function is as follows. Binds to DNA non-specifically. Could be a regulatory factor involved in maltose metabolism. The sequence is that of Sugar fermentation stimulation protein A from Escherichia coli (strain SMS-3-5 / SECEC).